The sequence spans 358 residues: Bis(monoacylglycero)phosphate synthase CLN5 (358 aa).

The interval 1 to 23 (MAQVGSAGPGACGRRGAGAGAGP) is disordered. Over 1 to 29 (MAQVGSAGPGACGRRGAGAGAGPERTTWR) the chain is Cytoplasmic. The span at 7 to 21 (AGPGACGRRGAGAGA) shows a compositional bias: gly residues. The chain crosses the membrane as a helical; Signal-anchor for type II membrane protein span at residues 30–46 (WAPALLWLATAAAVAGD). Residues 47–358 (PSRRQWPVPY…NRKNRTLSGL (312 aa)) are Lumenal-facing. 2 disulfides stabilise this stretch: C69/C158 and C76/C164. Catalysis depends on H116, which acts as the Proton acceptor. 4 N-linked (GlcNAc...) asparagine glycosylation sites follow: N129, N142, N177, and N202. C230 serves as the catalytic Nucleophile; Acyl-thioester intermediate. Residues N254, N270, and N280 are each glycosylated (N-linked (GlcNAc...) asparagine). A membrane-anchoring region spans residues 303–342 (FLLSLLQIFDAVVIHREFYLFYNFEYWFLPMKYPFIKITY). The N-linked (GlcNAc...) asparagine glycan is linked to N352.

It belongs to the CLN5 family. Multimer. Interacts with SORT1, RAB5A and RAB7A. Interacts with PPT1, TPP1, CLN3, CLN6, CLN8, ATP5F1A and ATP5F1B. Post-translationally, N-glycosylated with both high mannose and complex type sugars. Glycosylation is important for proper folding and trafficking to the lysosomes. In terms of processing, the type II membrane signal anchor is proteolytically cleaved to produce a mature form that is transported to the lysosomes (Bis(monoacylglycero)phosphate synthase CLN5, secreted form). Can undergo proteolytic cleavage at the C-terminus, probably by a cysteine protease and may involve the removal of approximately 10-15 residues from the C-terminal end.

The protein resides in the lysosome. Its subcellular location is the membrane. It catalyses the reaction S-hexadecanoyl-L-cysteinyl-[protein] + H2O = L-cysteinyl-[protein] + hexadecanoate + H(+). The catalysed reaction is 2 1-acyl-sn-glycero-3-phospho-(1'-sn-glycerol) = 1-acyl-sn-glycero-3-phospho-(3'-acyl-sn-1'-glycerol) + sn-glycero-3-phospho-(1'-sn-glycerol). The enzyme catalyses 2 1-(9Z-octadecenoyl)-sn-glycero-3-phospho-(1'-sn-glycerol) = 1-(9Z-octadecenoyl)-sn-glycero-3-phospho-(3'-(9Z-octadecenoyl)-1'-sn-glycerol) + sn-glycero-3-phospho-(1'-sn-glycerol). It carries out the reaction 2 1-octadecanoyl-sn-glycero-3-phospho-(1'-sn-glycerol) = 1-octadecanoyl-sn-glycero-3-phospho-(3'-octadecanoyl-1'-sn-glycerol) + sn-glycero-3-phospho-(1'-sn-glycerol). It catalyses the reaction 2 1-hexadecanoyl-sn-glycero-3-phospho-(1'-sn-glycerol) = 1-hexadecanoyl-sn-glycero-3-phospho-(3'-hexadecanoyl-1'-sn-glycerol) + sn-glycero-3-phospho-(1'-sn-glycerol). The catalysed reaction is 2 1-tetradecanoyl-sn-glycero-3-phospho-(1'-sn-glycerol) = 1-tetradecanoyl-sn-glycero-3-phospho-(3'-tetradecanoyl-1'-sn-glycerol) + sn-glycero-3-phospho-(1'-sn-glycerol). Catalyzes the synthesis of bis(monoacylglycero)phosphate (BMP) via transacylation of 2 molecules of lysophosphatidylglycerol (LPG). BMP also known as lysobisphosphatidic acid plays a key role in the formation of intraluminal vesicles and in maintaining intracellular cholesterol homeostasis. Can use only LPG as the exclusive lysophospholipid acyl donor for base exchange and displays BMP synthase activity towards various LPGs (LPG 14:0, LPG 16:0, LPG 18:0, LPG 18:1) with a higher preference for longer chain lengths. Plays a role in influencing the retrograde trafficking of lysosomal sorting receptors SORT1 and IGF2R from the endosomes to the trans-Golgi network by controlling the recruitment of retromer complex to the endosomal membrane. Regulates the localization and activation of RAB7A which is required to recruit the retromer complex to the endosomal membrane. Its function is as follows. Exhibits palmitoyl protein thioesterase (S-depalmitoylation) activity in vitro and most likely plays a role in protein S-depalmitoylation. This Bos taurus (Bovine) protein is Bis(monoacylglycero)phosphate synthase CLN5 (CLN5).